Reading from the N-terminus, the 542-residue chain is Membrane protein insertase YidC (542 aa).

5 helical membrane-spanning segments follow: residues 7-27, 338-358, 417-437, 455-475, and 494-514; these read LLVM…QQDF, FALL…IIGV, MGGC…YWTF, LSAQ…MFLL, and FMPV…VLYW.

The protein belongs to the OXA1/ALB3/YidC family. Type 1 subfamily. Interacts with the Sec translocase complex via SecD. Specifically interacts with transmembrane segments of nascent integral membrane proteins during membrane integration.

The protein localises to the cell inner membrane. Functionally, required for the insertion and/or proper folding and/or complex formation of integral membrane proteins into the membrane. Involved in integration of membrane proteins that insert both dependently and independently of the Sec translocase complex, as well as at least some lipoproteins. Aids folding of multispanning membrane proteins. The polypeptide is Membrane protein insertase YidC (Actinobacillus pleuropneumoniae serotype 7 (strain AP76)).